The sequence spans 1009 residues: DNA ligase 4 (1009 aa).

Disordered stretches follow at residues 1 to 34 (METD…APTL) and 51 to 72 (KKKP…LSAA). Basic residues predominate over residues 51-65 (KKKPVGPAGNRRKAG). The ATP site is built by glutamate 315, lysine 317, leucine 318, arginine 322, glutamate 384, phenylalanine 424, glutamate 484, lysine 489, lysine 506, and lysine 508. Lysine 317 (N6-AMP-lysine intermediate) is an active-site residue. Position 384 (glutamate 384) interacts with Mg(2+). Glutamate 484 contributes to the Mg(2+) binding site. BRCT domains lie at 715–808 (PSGH…PDLL) and 887–995 (PCGW…QHMP).

It belongs to the ATP-dependent DNA ligase family. Requires Mg(2+) as cofactor.

Its subcellular location is the nucleus. The catalysed reaction is ATP + (deoxyribonucleotide)n-3'-hydroxyl + 5'-phospho-(deoxyribonucleotide)m = (deoxyribonucleotide)n+m + AMP + diphosphate.. DNA ligase involved in DNA non-homologous end joining (NHEJ); required for double-strand break (DSB) repair. This Emericella nidulans (strain FGSC A4 / ATCC 38163 / CBS 112.46 / NRRL 194 / M139) (Aspergillus nidulans) protein is DNA ligase 4 (lig4).